The chain runs to 410 residues: Argininosuccinate synthase (410 aa).

Residues A10 to S18 and A37 each bind ATP. Residues Y90 and S95 each contribute to the L-citrulline site. ATP is bound at residue G120. Residues T122, N126, and D127 each coordinate L-aspartate. Residue N126 participates in L-citrulline binding. Positions 130, 182, 191, 267, and 279 each coordinate L-citrulline.

The protein belongs to the argininosuccinate synthase family. Type 1 subfamily. As to quaternary structure, homotetramer.

The protein resides in the cytoplasm. It carries out the reaction L-citrulline + L-aspartate + ATP = 2-(N(omega)-L-arginino)succinate + AMP + diphosphate + H(+). It functions in the pathway amino-acid biosynthesis; L-arginine biosynthesis; L-arginine from L-ornithine and carbamoyl phosphate: step 2/3. This Polynucleobacter asymbioticus (strain DSM 18221 / CIP 109841 / QLW-P1DMWA-1) (Polynucleobacter necessarius subsp. asymbioticus) protein is Argininosuccinate synthase.